We begin with the raw amino-acid sequence, 530 residues long: TNF receptor-associated factor family protein DDB_G0272829 (530 aa).

The segment at 35–81 (CQICEGLLISSLIPNRMKALQCINGHCFCLTCWESILEIKSECPTCR) adopts an RING-type; degenerate zinc-finger fold. TRAF-type zinc fingers lie at residues 134–188 (RHES…KQMQ) and 189–246 (GHIL…NDND). Disordered stretches follow at residues 242-267 (NNDN…LSSS), 391-432 (TTTT…DNQG), and 483-530 (FNQL…GTSL). Composition is skewed to low complexity over residues 253–267 (NNSN…LSSS), 391–415 (TTTT…NNNN), and 485–502 (QLSQ…SQSL). The stretch at 361 to 422 (ILEHQQQQNQ…NNNNEDEEDD (62 aa)) forms a coiled coil. Residues 509–530 (ITINQNQNTPSNPFSIFSGTSL) are compositionally biased toward polar residues.

The protein belongs to the TNF receptor-associated factor family.

Its subcellular location is the cytoplasm. Probable adapter protein and signal transducer that links members of the tumor necrosis factor receptor family to different signaling pathways by association with the receptor cytoplasmic domain and kinases. The protein is TNF receptor-associated factor family protein DDB_G0272829 of Dictyostelium discoideum (Social amoeba).